The primary structure comprises 183 residues: TATA box-binding protein-like 1 (183 aa).

This sequence belongs to the TBP family. As to quaternary structure, binds TFIIA and TFIIB. Present in the brain, heart, liver and gizzard.

Its subcellular location is the cytoplasm. The protein localises to the nucleus. Its function is as follows. Part of a specialized transcription system that mediates the transcription of most ribosomal proteins through the 5'-TCT-3' motif which is a core promoter element at these genes. Seems to also mediate the transcription of NF1. Does not bind the TATA box. The sequence is that of TATA box-binding protein-like 1 (TBPL1) from Gallus gallus (Chicken).